Here is a 306-residue protein sequence, read N- to C-terminus: UDP-N-acetylenolpyruvoylglucosamine reductase (306 aa).

In terms of domain architecture, FAD-binding PCMH-type spans 34-198 (VGGPADLLIT…LEVTFKLHNS (165 aa)). R177 is a catalytic residue. Residue S227 is the Proton donor of the active site. E297 is an active-site residue.

Belongs to the MurB family. The cofactor is FAD.

The protein resides in the cytoplasm. The catalysed reaction is UDP-N-acetyl-alpha-D-muramate + NADP(+) = UDP-N-acetyl-3-O-(1-carboxyvinyl)-alpha-D-glucosamine + NADPH + H(+). It functions in the pathway cell wall biogenesis; peptidoglycan biosynthesis. Functionally, cell wall formation. The polypeptide is UDP-N-acetylenolpyruvoylglucosamine reductase (Clostridium botulinum (strain 657 / Type Ba4)).